Consider the following 695-residue polypeptide: MGAKEKLEAMLNVALRVPSIMLLDVLYRWDVSSFFQQIQRSSLNKNPLFQYKYLALNMHYVGYILSVVLLTLPRQHLAKLYLYFVAALLLFAGHQISRDYVRSELESGYEGPMHLEPLSMNRFITALVGQLVVCTLCSCVMKTKQIWLFSAHMLPLLARLCLIPIETIVVINKFAMIFTGLEVLYFLASNLLVPFNLAKSAYRELAQVVEVYGLLALGMSLWNQLVVPVLFMVFWLVLFALQIYTYFSTRDQPTSRERLLFLFLTSIAECCSTPYSLLGLVFTVSFVALGVLTLCKFYLQGYRAFMNDPAMNRGMTEGVTLLILAVQTGLIELQVVHRAFLLSIILFIVVASILQSMLEIADPIVLALGASRDKSLWKHFRAVSLCLFLLVFPSYMAYMICQFFHMDFWLLIIISSSILTSLQVLGTLFVYVLFMIEEFRKEPVENVDDAIYYVNGTYRLLEFLVALCVVAYGVSETVFGEWTVMGSMIIFIHSYYNVWLRAQLGWKSFLLRRDAVNKIKSLPVSTKEQLEQHNDICSICYQDMNSAVITPCSHFFHPGCLKKWLYVQETCPLCHCQLKSLSQQAVAESGSSTNPVVEQSANNPPQEPLSAVAATTETLGTVPTCSALEQEPTMDIEPAESLVERRGELEVHVSQEEANSNSNEVLQRILTTGKVQPEDLNVKALPPESEVCAGI.

Transmembrane regions (helical) follow at residues 53 to 73 (YLAL…LTLP), 77 to 97 (LAKL…HQIS), 123 to 143 (FITA…VMKT), 146 to 166 (IWLF…IPIE), 168 to 188 (IVVI…YFLA), 225 to 245 (LVVP…QIYT), 275 to 295 (YSLL…LTLC), 316 to 336 (TEGV…LQVV), 340 to 360 (FLLS…MLEI), 384 to 404 (SLCL…CQFF), 410 to 430 (LLII…TLFV), 460 to 480 (LLEF…TVFG), and 482 to 502 (WTVM…WLRA). Residues 537–575 (CSICYQDMNSAVITPCSHFFHPGCLKKWLYVQETCPLCH) form an RING-type; atypical zinc finger. Polar residues predominate over residues 589-604 (SGSSTNPVVEQSANNP). Residues 589–608 (SGSSTNPVVEQSANNPPQEP) form a disordered region.

Its subcellular location is the membrane. The chain is RING finger protein 145 (rnf145) from Xenopus laevis (African clawed frog).